Reading from the N-terminus, the 608-residue chain is MATGQIFSKTTQALFYNYKQLPIQRMLDFDFLCGRETPSVAGIINPGSDGFQKLFFGQEEIAIPVHPTIEAACNAHPTADVFINFASFRSAAASSMSALKQPTIRVVAIIAEGVPESDTKQLISYARANNKVIIGPATVGGIQAGAFKIGDTAGTIDNIIQCKLYRPGSVGFVSKSGGMSNEMYNTIARVTDGIYEGIAIGGDVFPGSTLSDHILRFNNIPQVKMMVVLGELGGKDEYSLVEALKQGKVQKPVVAWVSGTCARLFKSEVQFGHAGAKSGGELESAQAKNQALKDAGAVVPTSYEALETAIKETFEKLVEDGKISPVTEITPPPIPEDLKTAIKSGKVRAPTHIISTISDDRGEEPCYAGVPMSTIIEQGYGVGDVISLLWFKRSLPRYCTQFIEMCIMLCADHGPCVSGAHNSIVTARAGKDLVSSLVSGLLTIGPRFGGAIDDAARYFKDAYDRNLTPYEFVEGMKKKGIRVPGIGHRIKSRDNRDKRVQLLQKYAHTHFPSVKYMEYAVQVETYTLSKANNLVLNVDGAIGSLFLDLLSGSGMFSKQEIDEIVEIGYLNGLFVLARSIGLIGHTFDQKRLKQPLYRHPWEDVLYTK.

ATP is bound by residues 214–234 (ILRF…ELGG) and 265–291 (FKSE…KNQA). Glutamate 231 is a binding site for Mg(2+). Catalysis depends on histidine 273, which acts as the Tele-phosphohistidine intermediate. 292–302 (LKDAGAVVPTS) lines the CoA pocket.

This sequence belongs to the succinate/malate CoA ligase alpha subunit family. As to quaternary structure, heterooctamer of 4 alpha and 4 beta chains.

The protein resides in the cytoplasm. It is found in the cytosol. The enzyme catalyses oxaloacetate + acetyl-CoA + ADP + phosphate = citrate + ATP + CoA. In terms of biological role, ATP citrate-lyase is the primary enzyme responsible for the synthesis of cytosolic acetyl-CoA, used for the elongation of fatty acids and biosynthesis of isoprenoids, flavonoids and malonated derivatives. May supply substrate to the cytosolic acetyl-CoA carboxylase, which generates the malonyl-CoA used for the synthesis of a multitude of compounds, including very long chain fatty acids and flavonoids. In contrast to all known animal ACL enzymes having a homomeric structure, plant ACLs are composed of alpha and beta chains. This Oryza sativa subsp. japonica (Rice) protein is ATP-citrate synthase beta chain protein 1 (ACLB-1).